Reading from the N-terminus, the 1581-residue chain is Rho guanine nucleotide exchange factor 5 (1581 aa).

Disordered stretches follow at residues 25-54 (EGIM…TDGH), 159-274 (VSKE…EQKQ), 316-643 (LRDS…RDGI), 659-700 (SEEF…PPTV), 741-810 (HSHP…PEFY), and 829-1051 (VPII…GSSD). The segment covering 41–54 (QEDRDPSYKWTDGH) has biased composition (basic and acidic residues). Polar residues predominate over residues 204–221 (KQLQLEATQENQGQEGFL). Residues 228-241 (GLEEQEGQEVEIQE) are compositionally biased toward acidic residues. 2 stretches are compositionally biased toward basic and acidic residues: residues 326–336 (QESREVEERRV) and 345–380 (RLVE…DSGD). Phosphoserine is present on serine 446. Residues 474 to 492 (LDNRTHNSQQEEFRLRKGI) are compositionally biased toward basic and acidic residues. Positions 496–507 (SASTSVAPSGTR) are enriched in polar residues. Over residues 515–531 (PNVFSSTATLSPVSSSV) the composition is skewed to low complexity. 5 stretches are compositionally biased toward polar residues: residues 569–595 (TSDT…NSFP), 603–613 (TPDSLGMSLSF), 662–685 (FTSN…QNSA), 748–760 (TLSS…SKGS), and 779–791 (TPES…TSIP). Positions 829 to 843 (VPIIDPSSEPPPLPP) are enriched in pro residues. Polar residues-rich tracts occupy residues 867-881 (PNNQ…SVGR), 889-905 (GRST…NNEV), and 912-925 (SNMT…SPTT). Residues serine 953 and serine 969 each carry the phosphoserine modification. Residues 975–986 (KNSEKPLHHQLE) show a composition bias toward basic and acidic residues. Serine 1029 and serine 1110 each carry phosphoserine. The 185-residue stretch at 1158–1342 (KLQEAKFELI…EKLIRDCNSN (185 aa)) folds into the DH domain. The 114-residue stretch at 1375–1488 (LVKSGELTAL…SALAMPREEL (114 aa)) folds into the PH domain. An SH3 domain is found at 1494 to 1555 (YDSPQVQCLR…PVQQVEFISN (62 aa)).

Interacts with SRC. Forms a ternary complex with SRC and the PI3K 85 kDa subunit. Interacts with and is activated by the heterodimer formed by GNB1 and GNG2. Interacts with ODAM (via C-terminus). Interacts with RHOA. Activation of SRC induces tyrosine phosphorylation of ARHGEF5.

Its subcellular location is the nucleus. The protein resides in the cytoplasm. It is found in the cell projection. The protein localises to the podosome. Functionally, guanine nucleotide exchange factor which activates Rho GTPases. Strongly activates RHOA. Also strongly activates RHOB, weakly activates RHOC and RHOG and shows no effect on RHOD, RHOV, RHOQ or RAC1. Involved in regulation of cell shape and actin cytoskeletal organization. Plays a role in actin organization by generating a loss of actin stress fibers and the formation of membrane ruffles and filopodia. Required for SRC-induced podosome formation. Involved in positive regulation of immature dendritic cell migration. The chain is Rho guanine nucleotide exchange factor 5 from Mus musculus (Mouse).